Reading from the N-terminus, the 131-residue chain is Small ribosomal subunit protein uS8 (131 aa).

Belongs to the universal ribosomal protein uS8 family. In terms of assembly, part of the 30S ribosomal subunit. Contacts proteins S5 and S12.

In terms of biological role, one of the primary rRNA binding proteins, it binds directly to 16S rRNA central domain where it helps coordinate assembly of the platform of the 30S subunit. The protein is Small ribosomal subunit protein uS8 of Delftia acidovorans (strain DSM 14801 / SPH-1).